The following is a 578-amino-acid chain: Malonate--CoA ligase ACSF3, mitochondrial (578 aa).

Residues 1 to 19 (MRVGAFLGRSLFSCSHVRG) constitute a mitochondrion transit peptide. Residue 205-213 (TSGTTGRPK) participates in ATP binding. The segment at 394–413 (QNPRKEGTSYTTHAQGDSTG) is disordered. Residues Asp-459, Arg-473, and Lys-565 each contribute to the ATP site.

It belongs to the ATP-dependent AMP-binding enzyme family.

Its subcellular location is the mitochondrion. The enzyme catalyses tetracosanoate + ATP + CoA = tetracosanoyl-CoA + AMP + diphosphate. It carries out the reaction malonate + ATP + CoA = malonyl-CoA + AMP + diphosphate. In terms of biological role, catalyzes the initial reaction in intramitochondrial fatty acid synthesis, by activating malonate and methylmalonate, but not acetate, into their respective CoA thioester. May have some preference toward very-long-chain substrates. In Xenopus laevis (African clawed frog), this protein is Malonate--CoA ligase ACSF3, mitochondrial.